We begin with the raw amino-acid sequence, 241 residues long: Demethylmenaquinone methyltransferase (241 aa).

Residues T68, D88, and 114-115 (DA) each bind S-adenosyl-L-methionine.

This sequence belongs to the class I-like SAM-binding methyltransferase superfamily. MenG/UbiE family.

It catalyses the reaction a 2-demethylmenaquinol + S-adenosyl-L-methionine = a menaquinol + S-adenosyl-L-homocysteine + H(+). Its pathway is quinol/quinone metabolism; menaquinone biosynthesis; menaquinol from 1,4-dihydroxy-2-naphthoate: step 2/2. Functionally, methyltransferase required for the conversion of demethylmenaquinol (DMKH2) to menaquinol (MKH2). This is Demethylmenaquinone methyltransferase from Deinococcus radiodurans (strain ATCC 13939 / DSM 20539 / JCM 16871 / CCUG 27074 / LMG 4051 / NBRC 15346 / NCIMB 9279 / VKM B-1422 / R1).